Consider the following 147-residue polypeptide: Phospholipase A2 SSD387 (147 aa).

An N-terminal signal peptide occupies residues 1–19 (MSPKFLLFSIIAVWSCAAA). The propeptide occupies 20 to 28 (IEALFIQPR). Intrachain disulfides connect Cys55–Cys71, Cys70–Cys130, Cys77–Cys123, Cys86–Cys116, and Cys109–Cys121. Gly56 and Gly58 together coordinate Ca(2+). Residue His74 is part of the active site. Asp75 provides a ligand contact to Ca(2+). Residue Asp124 is part of the active site.

Ca(2+) is required as a cofactor. Expressed by the venom gland.

It localises to the secreted. The enzyme catalyses a 1,2-diacyl-sn-glycero-3-phosphocholine + H2O = a 1-acyl-sn-glycero-3-phosphocholine + a fatty acid + H(+). Functionally, PLA2 catalyzes the calcium-dependent hydrolysis of the 2-acyl groups in 3-sn-phosphoglycerides. This is Phospholipase A2 SSD387 from Scolopendra dehaani (Thai centipede).